The following is a 202-amino-acid chain: Small ribosomal subunit protein uS5 (202 aa).

The segment covering 1-13 has biased composition (gly residues); that stretch reads MPGQQRRGGGSGG. Positions 1-31 are disordered; the sequence is MPGQQRRGGGSGGSDRRERRDRSGSGPAQEK. The segment covering 14–23 has biased composition (basic and acidic residues); that stretch reads SDRRERRDRS. Residues 34–97 enclose the S5 DRBM domain; that stretch reads YVERVVAINR…EEAKKHFFKV (64 aa).

It belongs to the universal ribosomal protein uS5 family. In terms of assembly, part of the 30S ribosomal subunit. Contacts proteins S4 and S8.

Functionally, with S4 and S12 plays an important role in translational accuracy. Its function is as follows. Located at the back of the 30S subunit body where it stabilizes the conformation of the head with respect to the body. This chain is Small ribosomal subunit protein uS5, found in Frankia casuarinae (strain DSM 45818 / CECT 9043 / HFP020203 / CcI3).